A 285-amino-acid polypeptide reads, in one-letter code: Acetylglutamate kinase (285 aa).

Residues 64 to 65 (GG), R86, and N181 each bind substrate.

This sequence belongs to the acetylglutamate kinase family. ArgB subfamily.

It is found in the cytoplasm. It catalyses the reaction N-acetyl-L-glutamate + ATP = N-acetyl-L-glutamyl 5-phosphate + ADP. It participates in amino-acid biosynthesis; L-arginine biosynthesis; N(2)-acetyl-L-ornithine from L-glutamate: step 2/4. Its function is as follows. Catalyzes the ATP-dependent phosphorylation of N-acetyl-L-glutamate. This is Acetylglutamate kinase from Clostridium beijerinckii (strain ATCC 51743 / NCIMB 8052) (Clostridium acetobutylicum).